The primary structure comprises 434 residues: Protein ENHANCED PSEUDOMONAS SUSCEPTIBILITY 1 (434 aa).

Asp-376 serves as the catalytic Proton acceptor.

This sequence belongs to the plant acyltransferase family.

Required for pathogen-induced salicylic acid (SA) accumulation and SA-mediated resistance to virulent and avirulent pathogens (e.g. P.syringae). The polypeptide is Protein ENHANCED PSEUDOMONAS SUSCEPTIBILITY 1 (Arabidopsis thaliana (Mouse-ear cress)).